Consider the following 345-residue polypeptide: MTVQGKKITVHDMTLRDGMHPKRHLMTLEQMKNIATGLDEAGVPLIEVTHGDGLGGSSVNYGFPAHSDEEYLGAVIPLMKQAKISALLLPGIGTVEHLHMAKDLGVHTIRVATHCTEADVSEQHITAARKLDMDTVGFLMMAHMASPEKLITQAKLMEGYGANCIYVTDSAGYMLPGDVKLRLEAVRAALRPETELGFHGHHNLAMGVANSVAAVEAGANRIDAAAAGLGAGAGNTPMEVFIAVCDRMGIETGVDVFKIQDVAEDRVVPIMDHIIRVDRDSLTLGYAGVYSSFLLFAKRAEKKYGVSARDILVEMGRRKMVGGQEDMIEDTAITMARERAGCAAA.

The Pyruvate carboxyltransferase domain occupies Ile-8–Gln-260. Arg-16 to Asp-17 provides a ligand contact to substrate. Asp-17 contributes to the Mn(2+) binding site. His-20 functions as the Proton acceptor in the catalytic mechanism. 2 residues coordinate substrate: Ser-170 and His-199. Positions 199 and 201 each coordinate Mn(2+). Tyr-290 contributes to the substrate binding site.

This sequence belongs to the 4-hydroxy-2-oxovalerate aldolase family.

It catalyses the reaction (S)-4-hydroxy-2-oxopentanoate = acetaldehyde + pyruvate. The polypeptide is 4-hydroxy-2-oxovalerate aldolase (Leptothrix cholodnii (strain ATCC 51168 / LMG 8142 / SP-6) (Leptothrix discophora (strain SP-6))).